The sequence spans 362 residues: Melatonin receptor type 1B (362 aa).

At 1–42 the chain is on the extracellular side; the sequence is MSENGSFANCCEAGGWAVRPGWSGAGSARPSRTPRPPWVAPA. The N-linked (GlcNAc...) asparagine glycan is linked to Asn-4. Residues 43–63 traverse the membrane as a helical segment; it reads LSAVLIVTTAVDVVGNLLVIL. Over 64–76 the chain is Cytoplasmic; the sequence is SVLRNRKLRNAGN. The chain crosses the membrane as a helical span at residues 77 to 97; it reads LFLVSLALADLVVAFYPYPLI. The Extracellular segment spans residues 98-115; it reads LVAIFYDGWALGEEHCKA. An intrachain disulfide couples Cys-113 to Cys-190. Residues 116–136 form a helical membrane-spanning segment; that stretch reads SAFVMGLSVIGSVFNITAIAI. Topologically, residues 137 to 155 are cytoplasmic; that stretch reads NRYCYICHSMAYHRIYRRW. A helical transmembrane segment spans residues 156 to 176; that stretch reads HTPLHICLIWLLTVVALLPNF. Residues Asn-175 and Gln-194 each contribute to the melatonin site. Residues 177–200 are Extracellular-facing; sequence FVGSLEYDPRIYSCTFIQTASTQY. Residues 201–221 form a helical membrane-spanning segment; that stretch reads TAAVVVIHFLLPIAVVSFCYL. The Cytoplasmic portion of the chain corresponds to 222–253; it reads RIWVLVLQARRKAKPESRLCLKPSDLRSFLTM. A helical membrane pass occupies residues 254–274; the sequence is FVVFVIFAICWAPLNCIGLAV. The Extracellular segment spans residues 275–287; it reads AINPQEMAPQIPE. A helical membrane pass occupies residues 288–308; sequence GLFVTSYLLAYFNSCLNAIVY. Topologically, residues 309–362 are cytoplasmic; it reads GLLNQNFRREYKRILLALWNPRHCIQDASKGSHAEGLQSPAPPIIGVQHQADAL.

The protein belongs to the G-protein coupled receptor 1 family. In terms of assembly, interacts with GPR61, GPR62 and GPR135. In terms of tissue distribution, expressed in retina and less in brain and hippocampus.

It is found in the cell membrane. High affinity receptor for melatonin. Likely to mediate the reproductive and circadian actions of melatonin. The activity of this receptor is mediated by pertussis toxin sensitive G proteins that inhibit adenylate cyclase activity. The sequence is that of Melatonin receptor type 1B (MTNR1B) from Homo sapiens (Human).